Reading from the N-terminus, the 170-residue chain is Adenine phosphoribosyltransferase (170 aa).

Belongs to the purine/pyrimidine phosphoribosyltransferase family. As to quaternary structure, homodimer.

The protein localises to the cytoplasm. It catalyses the reaction AMP + diphosphate = 5-phospho-alpha-D-ribose 1-diphosphate + adenine. Its pathway is purine metabolism; AMP biosynthesis via salvage pathway; AMP from adenine: step 1/1. Catalyzes a salvage reaction resulting in the formation of AMP, that is energically less costly than de novo synthesis. The protein is Adenine phosphoribosyltransferase of Thermosynechococcus vestitus (strain NIES-2133 / IAM M-273 / BP-1).